The following is a 286-amino-acid chain: Putative ribosome-inactivating protein (286 aa).

An N-terminal signal peptide occupies residues 1 to 21; that stretch reads MNRFSVLMCLVILSIFHGVPT. Residues Asn103 and Asn110 are each glycosylated (N-linked (GlcNAc...) asparagine). Glu185 is an active-site residue. The N-linked (GlcNAc...) asparagine glycan is linked to Asn252.

This sequence belongs to the ribosome-inactivating protein family. Type 1 RIP subfamily.

The catalysed reaction is Endohydrolysis of the N-glycosidic bond at one specific adenosine on the 28S rRNA.. This chain is Putative ribosome-inactivating protein, found in Cucumis ficifolius (Cucumis figarei).